The sequence spans 293 residues: Elongation factor Ts (293 aa).

The interval 80-83 (TDFV) is involved in Mg(2+) ion dislocation from EF-Tu.

It belongs to the EF-Ts family.

It localises to the cytoplasm. Functionally, associates with the EF-Tu.GDP complex and induces the exchange of GDP to GTP. It remains bound to the aminoacyl-tRNA.EF-Tu.GTP complex up to the GTP hydrolysis stage on the ribosome. This is Elongation factor Ts from Burkholderia lata (strain ATCC 17760 / DSM 23089 / LMG 22485 / NCIMB 9086 / R18194 / 383).